The primary structure comprises 234 residues: L-cystine transport system permease protein TcyB (234 aa).

5 helical membrane-spanning segments follow: residues Ala-8–Leu-28, Ile-36–Ala-56, Thr-78–Leu-98, Pro-100–Ile-120, and Ile-199–Leu-219. Positions Ile-32–Gln-221 constitute an ABC transmembrane type-1 domain.

The protein belongs to the binding-protein-dependent transport system permease family. The complex is composed of two ATP-binding proteins (TcyC), two transmembrane proteins (TcyB) and a solute-binding protein (TcyA).

The protein resides in the cell membrane. Functionally, part of the ABC transporter complex TcyABC involved in L-cystine import. Probably responsible for the translocation of the substrate across the membrane. The chain is L-cystine transport system permease protein TcyB (tcyB) from Bacillus subtilis (strain 168).